The sequence spans 99 residues: Acylphosphatase (99 aa).

Residues 10–99 enclose the Acylphosphatase-like domain; that stretch reads RLTAFVHGHV…PRGVEGFTER (90 aa). Active-site residues include Arg25 and Asn43.

The protein belongs to the acylphosphatase family.

The catalysed reaction is an acyl phosphate + H2O = a carboxylate + phosphate + H(+). This chain is Acylphosphatase (acyP), found in Corynebacterium efficiens (strain DSM 44549 / YS-314 / AJ 12310 / JCM 11189 / NBRC 100395).